Reading from the N-terminus, the 1137-residue chain is Eukaryotic translation initiation factor 3 subunit A (1137 aa).

Residues L319 to T501 form the PCI domain. Basic and acidic residues-rich tracts occupy residues Q588–E623 and A829–D899. 2 disordered regions span residues Q588–I631 and A829–R1137. S908 carries the phosphoserine modification. Basic and acidic residues-rich tracts occupy residues R922–S971, S985–R1046, D1054–Q1083, and A1106–D1127.

Belongs to the eIF-3 subunit A family. Component of the eukaryotic translation initiation factor 3 (eIF-3) complex. The eIF-3 complex interacts with pix.

It localises to the cytoplasm. Its function is as follows. RNA-binding component of the eukaryotic translation initiation factor 3 (eIF-3) complex, which is involved in protein synthesis of a specialized repertoire of mRNAs and, together with other initiation factors, stimulates binding of mRNA and methionyl-tRNAi to the 40S ribosome. The eIF-3 complex specifically targets and initiates translation of a subset of mRNAs involved in cell proliferation. This Drosophila yakuba (Fruit fly) protein is Eukaryotic translation initiation factor 3 subunit A.